The primary structure comprises 734 residues: NAD(P)H-quinone oxidoreductase subunit 5, chloroplastic (734 aa).

Transmembrane regions (helical) follow at residues 9–29 (WIIP…LFFF), 40–60 (YAII…DLLW), 89–109 (IDPL…TVMI), 121–140 (YVRF…GLVI), 144–166 (LIQI…GFWF), 185–205 (GDFG…SFKF), 219–239 (HEVS…GPVA), 258–278 (TPIS…FLVA), 289–311 (LVMS…VALA), 318–338 (VLAY…GIGS), 395–415 (GTTF…ACFW), and 425–445 (WLYF…TGFY). The interval 512-534 (DKNVKNSVSTQSSREEYSPHPKE) is disordered. Residues 524 to 534 (SREEYSPHPKE) are compositionally biased toward basic and acidic residues. The next 3 helical transmembrane spans lie at 539-559 (MLFP…IGVP), 601-621 (VGTA…IPFF), and 707-727 (ISYY…VVIN).

It belongs to the complex I subunit 5 family. NDH is composed of at least 16 different subunits, 5 of which are encoded in the nucleus.

It localises to the plastid. The protein localises to the chloroplast thylakoid membrane. It catalyses the reaction a plastoquinone + NADH + (n+1) H(+)(in) = a plastoquinol + NAD(+) + n H(+)(out). The enzyme catalyses a plastoquinone + NADPH + (n+1) H(+)(in) = a plastoquinol + NADP(+) + n H(+)(out). Functionally, NDH shuttles electrons from NAD(P)H:plastoquinone, via FMN and iron-sulfur (Fe-S) centers, to quinones in the photosynthetic chain and possibly in a chloroplast respiratory chain. The immediate electron acceptor for the enzyme in this species is believed to be plastoquinone. Couples the redox reaction to proton translocation, and thus conserves the redox energy in a proton gradient. The chain is NAD(P)H-quinone oxidoreductase subunit 5, chloroplastic (ndhF) from Huperzia lucidula (Shining clubmoss).